Reading from the N-terminus, the 68-residue chain is Phosphatidylinositol N-acetylglucosaminyltransferase ERI1 subunit (68 aa).

2 consecutive transmembrane segments (helical) span residues 8-28 (FLVLGFTYSVLLISLATFYWL) and 34-54 (FLHYWCVLLLCPATLWLWALI).

Component of the phosphatidylinositol N-acetylglucosaminyltransferase (GPI-GlcNAc transferase) complex composed of at least GPI1, GPI2, GPI3, GPI15, GPI19 and ERI1. Interacts with GPI2. Interacts with GTP-bound RAS2 in an effector loop-dependent manner.

It localises to the endoplasmic reticulum membrane. It participates in glycolipid biosynthesis; glycosylphosphatidylinositol-anchor biosynthesis. In terms of biological role, probable component of the GPI-GlcNAc transferase (GPI-GnT) complex in the endoplasmic reticulum, a complex that catalyzes transfer of GlcNAc from UDP-GlcNAc to an acceptor phosphatidylinositol, the first step in the production of GPI-anchors for cell surface proteins. Ras may inhibit the enzyme activity of the GPI-GnT complex via the association between ERI1 and RAS2. The chain is Phosphatidylinositol N-acetylglucosaminyltransferase ERI1 subunit (ERI1) from Saccharomyces cerevisiae (strain ATCC 204508 / S288c) (Baker's yeast).